The primary structure comprises 680 residues: Dihydroxyacetone phosphate acyltransferase (680 aa).

Phosphoserine occurs at positions 12 and 17. The HXXXXD motif motif lies at 162–167 (HRSYID). An N6-acetyllysine modification is found at Lys-643. Positions 678–680 (AKL) match the Microbody targeting signal motif.

This sequence belongs to the GPAT/DAPAT family. As to quaternary structure, part of a heterotrimeric complex composed of GNPAT, AGPS and a modified form of GNPAT.

Its subcellular location is the peroxisome membrane. The catalysed reaction is dihydroxyacetone phosphate + an acyl-CoA = a 1-acylglycerone 3-phosphate + CoA. It carries out the reaction dihydroxyacetone phosphate + hexadecanoyl-CoA = 1-hexadecanoylglycerone 3-phosphate + CoA. It functions in the pathway membrane lipid metabolism; glycerophospholipid metabolism. Dihydroxyacetonephosphate acyltransferase catalyzing the first step in the biosynthesis of plasmalogens, a subset of phospholipids that differ from other glycerolipids by having an alkyl chain attached through a vinyl ether linkage at the sn-1 position of the glycerol backbone, and which unique physical properties have an impact on various aspects of cell signaling and membrane biology. The sequence is that of Dihydroxyacetone phosphate acyltransferase from Homo sapiens (Human).